Consider the following 539-residue polypeptide: GMP synthase [glutamine-hydrolyzing] (539 aa).

The Glutamine amidotransferase type-1 domain occupies 4–202; the sequence is KILILDFGSQ…VLQIAGAKPD (199 aa). The Nucleophile role is filled by C81. Active-site residues include H176 and E178. Positions 203–395 constitute a GMPS ATP-PPase domain; that stretch reads WIMKNHIEEA…LGLPPEMVYR (193 aa). Residue 230-236 coordinates ATP; it reads SGGVDSS.

In terms of assembly, homodimer.

The enzyme catalyses XMP + L-glutamine + ATP + H2O = GMP + L-glutamate + AMP + diphosphate + 2 H(+). Its pathway is purine metabolism; GMP biosynthesis; GMP from XMP (L-Gln route): step 1/1. Its function is as follows. Catalyzes the synthesis of GMP from XMP. This is GMP synthase [glutamine-hydrolyzing] from Burkholderia cenocepacia (strain ATCC BAA-245 / DSM 16553 / LMG 16656 / NCTC 13227 / J2315 / CF5610) (Burkholderia cepacia (strain J2315)).